The chain runs to 98 residues: Small ribosomal subunit protein bS20 (98 aa).

It belongs to the bacterial ribosomal protein bS20 family.

Binds directly to 16S ribosomal RNA. The polypeptide is Small ribosomal subunit protein bS20 (Synechococcus elongatus (strain ATCC 33912 / PCC 7942 / FACHB-805) (Anacystis nidulans R2)).